The primary structure comprises 567 residues: 2-succinyl-5-enolpyruvyl-6-hydroxy-3-cyclohexene-1-carboxylate synthase (567 aa).

It belongs to the TPP enzyme family. MenD subfamily. Homodimer. Requires Mg(2+) as cofactor. The cofactor is Mn(2+). Thiamine diphosphate serves as cofactor.

It catalyses the reaction isochorismate + 2-oxoglutarate + H(+) = 5-enolpyruvoyl-6-hydroxy-2-succinyl-cyclohex-3-ene-1-carboxylate + CO2. It participates in quinol/quinone metabolism; 1,4-dihydroxy-2-naphthoate biosynthesis; 1,4-dihydroxy-2-naphthoate from chorismate: step 2/7. The protein operates within quinol/quinone metabolism; menaquinone biosynthesis. Its function is as follows. Catalyzes the thiamine diphosphate-dependent decarboxylation of 2-oxoglutarate and the subsequent addition of the resulting succinic semialdehyde-thiamine pyrophosphate anion to isochorismate to yield 2-succinyl-5-enolpyruvyl-6-hydroxy-3-cyclohexene-1-carboxylate (SEPHCHC). The polypeptide is 2-succinyl-5-enolpyruvyl-6-hydroxy-3-cyclohexene-1-carboxylate synthase (Yersinia pestis bv. Antiqua (strain Angola)).